The sequence spans 358 residues: DNA integrity scanning protein DisA (358 aa).

In terms of domain architecture, DAC spans 6–144; sequence RPTLREAVAR…RGERHVLTDS (139 aa). ATP contacts are provided by residues glycine 73, leucine 91, and 104-108; that span reads TRHRS.

Belongs to the DisA family. Homooctamer. It depends on Mg(2+) as a cofactor.

It catalyses the reaction 2 ATP = 3',3'-c-di-AMP + 2 diphosphate. Functionally, participates in a DNA-damage check-point. DisA forms globular foci that rapidly scan along the chromosomes searching for lesions. Also has diadenylate cyclase activity, catalyzing the condensation of 2 ATP molecules into cyclic di-AMP (c-di-AMP). c-di-AMP likely acts as a signaling molecule that may couple DNA integrity with a cellular process. The protein is DNA integrity scanning protein DisA of Mycobacterium tuberculosis (strain ATCC 25177 / H37Ra).